The primary structure comprises 544 residues: Ribosomal oxygenase 1 (544 aa).

Residues 1 to 78 (MERKHMSALS…HEGERDCREM (78 aa)) are disordered. The segment covering 10–19 (SIYQSLSGGK) has biased composition (polar residues). Positions 42-53 (PSKKATKKKGTK) are enriched in basic residues. Residues 63–78 (SSEKEKHEGERDCREM) show a composition bias toward basic and acidic residues. The JmjC domain occupies 197–342 (CSIRMLNPQA…DLMLKLMPAA (146 aa)). Positions 243, 245, and 308 each coordinate Fe cation.

This sequence belongs to the ROX family. NO66 subfamily. Fe(2+) serves as cofactor.

It localises to the nucleus. The protein localises to the nucleolus. It is found in the nucleoplasm. It carries out the reaction N(6),N(6)-dimethyl-L-lysyl(36)-[histone H3] + 2 2-oxoglutarate + 2 O2 = L-lysyl(36)-[histone H3] + 2 formaldehyde + 2 succinate + 2 CO2. The catalysed reaction is N(6)-methyl-L-lysyl-[protein] + 2-oxoglutarate + O2 = L-lysyl-[protein] + formaldehyde + succinate + CO2. The enzyme catalyses L-histidyl-[protein] + 2-oxoglutarate + O2 = (3S)-3-hydroxy-L-histidyl-[protein] + succinate + CO2. Its function is as follows. Oxygenase that can act as both a histone lysine demethylase and a ribosomal histidine hydroxylase. Specifically demethylates 'Lys-4' (H3K4me) and 'Lys-36' (H3K36me) of histone H3, thereby playing a central role in histone code. Preferentially demethylates trimethylated H3 'Lys-4' (H3K4me3) and monomethylated H3 'Lys-4' (H3K4me1) residues, while it has weaker activity for dimethylated H3 'Lys-36' (H3K36me2). Also catalyzes demethylation of non-histone proteins. Also catalyzes the hydroxylation of 60S ribosomal protein L8 on 'His-216', thereby playing a role in ribosome biogenesis. In Danio rerio (Zebrafish), this protein is Ribosomal oxygenase 1 (riox1).